A 136-amino-acid polypeptide reads, in one-letter code: Nucleoside diphosphate kinase (136 aa).

Positions 10, 58, 86, 92, 104, and 114 each coordinate ATP. Residue His117 is the Pros-phosphohistidine intermediate of the active site.

It belongs to the NDK family. In terms of assembly, homotetramer. The cofactor is Mg(2+).

It is found in the cytoplasm. It catalyses the reaction a 2'-deoxyribonucleoside 5'-diphosphate + ATP = a 2'-deoxyribonucleoside 5'-triphosphate + ADP. The enzyme catalyses a ribonucleoside 5'-diphosphate + ATP = a ribonucleoside 5'-triphosphate + ADP. Major role in the synthesis of nucleoside triphosphates other than ATP. The ATP gamma phosphate is transferred to the NDP beta phosphate via a ping-pong mechanism, using a phosphorylated active-site intermediate. The chain is Nucleoside diphosphate kinase from Mycobacterium marinum (strain ATCC BAA-535 / M).